The chain runs to 148 residues: Ubiquitin conjugating enzyme E2 B (148 aa).

In terms of domain architecture, UBC core spans 2-148 (AAHKRLQKEI…AKEWTKKYAK (147 aa)). C87 acts as the Glycyl thioester intermediate in catalysis.

The protein belongs to the ubiquitin-conjugating enzyme family. As to quaternary structure, interacts with mkkA (via F-box/WD40 repeat domains).

It carries out the reaction S-ubiquitinyl-[E1 ubiquitin-activating enzyme]-L-cysteine + [E2 ubiquitin-conjugating enzyme]-L-cysteine = [E1 ubiquitin-activating enzyme]-L-cysteine + S-ubiquitinyl-[E2 ubiquitin-conjugating enzyme]-L-cysteine.. It participates in protein modification; protein ubiquitination. In terms of biological role, involved in protein ubiquitination and degradation during development. Mediates protein ubiquitination at the mound and finger stage required for subsequent development and may be an essential component of the developmental transition between the induction of postaggregative gene expression and subsequent cell-type differentiation and morphogenesis. ubcB and ubpB differentially control ubiquitination/deubiquitination and degradation of mkkA protein in a cell-type-specific and temporally regulated manner. This is Ubiquitin conjugating enzyme E2 B (ubcB) from Dictyostelium discoideum (Social amoeba).